A 769-amino-acid polypeptide reads, in one-letter code: MTSYDLILAAAAGAVCLAISVALWSHGQRRNLEARIVALKTRLIQQGGSDDAPAWLDAFDTAVIAVEGGRANLVAGGEGLIACAKALGADAEVSAVVAALSDADPNYAQKLTALFERGEPCVFEARGPHGLVSVEGRAAGALAWLRLAPIDRADSGLPTAARFAAFVDSVVEPCWIAGADGQAIWGNAAFVRAVGAASAQAPALAGKSFDRGADAVVVEAAGKGERREALRWINVEGRRRAFRLSAQPLDGGGVGVFCADVTEIEDVRDAFKKHVEAHDETLNHIAEAVAIFSQTRRLSYHNTAFAELWGLEPAWLADRPTHGEVLDRLRQRRRLPETIDYAGWKAAELARYEDLGPQADDLWDLPDGRTLKVVRQPHPLGGMLLIYSDITGELRLKAQYNALIQVQQATLDKLNDAVAVFGSDGRLRLHNEAFETFWNVTPHALEAAGDFEGVVELCVPRLHDLSFWRELKGRVADPDPQMRAPTSGEVRTSDSRIVLYQSRPLPDGATLIAFADVTDTRDLQSALADRSAALAEAERLKRDFVGNVSYELRTPLTTIIGYSELLERADGISERGRNHVAAVRAAATQLARSIDDVLDMAQIDAGEMALEIEDIRVSDLLLNAQERALKDAQLGGVTLAVECEEDVGLIRGDGKRLAQTLDHLVENALRQTPPGGRVTLSARRALGEVRLDVSDTGRGVPFHVQAHIFDRFVGRDRGGPGLGLALVKALVELHGGWVALESEPGNGSTFTCHLPETQQPGAMQPELGF.

Residues 6-26 (LILAAAAGAVCLAISVALWSH) traverse the membrane as a helical segment. A Histidine kinase domain is found at 547-758 (NVSYELRTPL…TFTCHLPETQ (212 aa)). Tyrosine 550 carries the phosphotyrosine; by autocatalysis modification.

In terms of processing, autophosphorylated.

The protein localises to the cell membrane. It catalyses the reaction ATP + protein L-histidine = ADP + protein N-phospho-L-histidine.. Its function is as follows. Required for cell division and growth. It catalyzes the phosphorylation of CtrA and activates transcription in vitro of the cell cycle-regulated fliF promoter. This is Sensor protein DivL (divL) from Caulobacter vibrioides (strain ATCC 19089 / CIP 103742 / CB 15) (Caulobacter crescentus).